Consider the following 1379-residue polypeptide: Hepatocyte growth factor receptor (1379 aa).

An N-terminal signal peptide occupies residues 1–24; the sequence is MKAPTVLAPGILVLLLSLVQRSHG. Topologically, residues 25 to 931 are extracellular; that stretch reads ECKEALVKSE…VIVQPDQNFA (907 aa). The Sema domain maps to 27 to 514; the sequence is KEALVKSEMN…TGKKITKIPL (488 aa). N45 carries N-linked (GlcNAc...) asparagine glycosylation. 4 cysteine pairs are disulfide-bonded: C95–C101, C98–C160, C133–C141, and C171–C174. N106 carries an N-linked (GlcNAc...) asparagine glycan. N-linked (GlcNAc...) asparagine glycosylation is found at N201 and N357. Disulfide bonds link C297/C362 and C384/C396. N398 and N404 each carry an N-linked (GlcNAc...) asparagine glycan. Intrachain disulfides connect C519-C537, C525-C560, C528-C544, and C540-C550. IPT/TIG domains are found at residues 562-654, 656-738, and 741-835; these read PAVY…FSYV, PVIT…FSYR, and PVVY…LTYV. A glycan (O-linked (Man) threonine) is linked at T581. Residues N606 and N634 are each glycosylated (N-linked (GlcNAc...) asparagine). O-linked (Man) threonine glycosylation is found at T675 and T760. N-linked (GlcNAc...) asparagine glycans are attached at residues N784 and N878. Residues 932-954 traverse the membrane as a helical segment; the sequence is GLIIGAVSISVVVLLLSGLFLWM. Topologically, residues 955 to 1379 are cytoplasmic; sequence RKRKHKDLGS…QDNIDGEGNT (425 aa). Phosphoserine is present on S964. T975 bears the Phosphothreonine mark. Residues S988, S995, and S998 each carry the phosphoserine modification. Position 1001 is a phosphotyrosine (Y1001). Positions 1076-1343 constitute a Protein kinase domain; the sequence is VHFNEVIGRG…RISSIFSTFI (268 aa). ATP-binding positions include 1082–1090 and K1108; that span reads IGRGHFGCV. D1202 serves as the catalytic Proton acceptor. The interval 1210–1379 is interaction with RANBP9; it reads LDEKFTVKVA…QDNIDGEGNT (170 aa). Position 1228 is a phosphotyrosine (Y1228). Phosphotyrosine; by autocatalysis occurs at positions 1232 and 1233. T1287 bears the Phosphothreonine mark. Positions 1318 to 1357 are interaction with MUC20; it reads WHPKAEMRPSFSELVSRISSIFSTFIGEHYVHVNATYVNV. 2 positions are modified to phosphotyrosine; by autocatalysis: Y1347 and Y1354. Y1363 carries the post-translational modification Phosphotyrosine.

This sequence belongs to the protein kinase superfamily. Tyr protein kinase family. As to quaternary structure, heterodimer made of an alpha chain (50 kDa) and a beta chain (145 kDa) which are disulfide linked. Binds PLXNB1. Interacts when phosphorylated with downstream effectors including STAT3, PIK3R1, SRC, PCLG1, GRB2 and GAB1. When phosphorylated at Tyr-1354, interacts with INPPL1/SHIP2. Interacts with RANBP9 and RANBP10. Interacts with INPP5D/SHIP1. Interacts with SPSB1, SPSB2, SPSB4 and probably SPSB3. SPSB1 binding occurs in the presence and in the absence of HGF, however HGF treatment has a positive effect on this interaction. Interacts with MUC20; prevents interaction with GRB2 and suppresses hepatocyte growth factor-induced cell proliferation. Interacts with GRB10. Interacts with PTPN1 and PTPN2. Interacts with HSP90AA1 and HSP90AB1; the interaction suppresses MET kinase activity. Interacts with tensin TNS3. Interacts (when phosphorylated) with tensin TNS4 (via SH2 domain); the interaction increases MET protein stability by inhibiting MET endocytosis and subsequent lysosomal degradation. In terms of assembly, (Microbial infection) Interacts with L.monocytogenes InlB. InlB probably dimerizes upon binding to MET, which encourages subsequent dimerization of MET. Post-translationally, autophosphorylated in response to ligand binding on Tyr-1232 and Tyr-1233 in the kinase domain leading to further phosphorylation of Tyr-1347 and Tyr-1354 in the C-terminal multifunctional docking site. Dephosphorylated by PTPRJ at Tyr-1347 and Tyr-1363. Dephosphorylated by PTPN1 and PTPN2. Ubiquitinated. Ubiquitination by CBL regulates MET endocytosis, resulting in decreasing plasma membrane receptor abundance, and in endosomal degradation and/or recycling of internalized receptors. In terms of processing, O-mannosylation of IPT/TIG domains by TMEM260 is required for protein maturation. O-mannosylated residues are composed of single mannose glycans that are not elongated or modified. Post-translationally, (Microbial infection) Tyrosine phosphorylation is stimulated by L.monocytogenes InlB.

The protein localises to the membrane. The enzyme catalyses L-tyrosyl-[protein] + ATP = O-phospho-L-tyrosyl-[protein] + ADP + H(+). Its activity is regulated as follows. In its inactive state, the C-terminal tail interacts with the catalytic domain and inhibits the kinase activity. Upon ligand binding, the C-terminal tail is displaced and becomes phosphorylated, thus increasing the kinase activity. Receptor tyrosine kinase that transduces signals from the extracellular matrix into the cytoplasm by binding to hepatocyte growth factor/HGF ligand. Regulates many physiological processes including proliferation, scattering, morphogenesis and survival. Ligand binding at the cell surface induces autophosphorylation of MET on its intracellular domain that provides docking sites for downstream signaling molecules. Following activation by ligand, interacts with the PI3-kinase subunit PIK3R1, PLCG1, SRC, GRB2, STAT3 or the adapter GAB1. Recruitment of these downstream effectors by MET leads to the activation of several signaling cascades including the RAS-ERK, PI3 kinase-AKT, or PLCgamma-PKC. The RAS-ERK activation is associated with the morphogenetic effects while PI3K/AKT coordinates prosurvival effects. During embryonic development, MET signaling plays a role in gastrulation, development and migration of neuronal precursors, angiogenesis and kidney formation. During skeletal muscle development, it is crucial for the migration of muscle progenitor cells and for the proliferation of secondary myoblasts. In adults, participates in wound healing as well as organ regeneration and tissue remodeling. Also promotes differentiation and proliferation of hematopoietic cells. May regulate cortical bone osteogenesis. Functionally, (Microbial infection) Acts as a receptor for Listeria monocytogenes internalin InlB, mediating entry of the pathogen into cells. The protein is Hepatocyte growth factor receptor (Met) of Mus musculus (Mouse).